Consider the following 99-residue polypeptide: Integration host factor subunit alpha (99 aa).

Belongs to the bacterial histone-like protein family. As to quaternary structure, heterodimer of an alpha and a beta chain.

Functionally, this protein is one of the two subunits of integration host factor, a specific DNA-binding protein that functions in genetic recombination as well as in transcriptional and translational control. In Thioalkalivibrio sulfidiphilus (strain HL-EbGR7), this protein is Integration host factor subunit alpha.